The sequence spans 671 residues: UvrABC system protein B (671 aa).

In terms of domain architecture, Helicase ATP-binding spans 26 to 183 (EGLENGLAHQ…RRLSELQYSR (158 aa)). 39 to 46 (GVTGSGKT) serves as a coordination point for ATP. The short motif at 92–115 (YYDYYQPEAYVPSSDTFIEKDASV) is the Beta-hairpin element. The region spanning 431–593 (QVDDLLSEIR…IIPQGLNKKI (163 aa)) is the Helicase C-terminal domain. The UVR domain maps to 631-666 (DQKIRELEAKMYTYAQNLEFEQAAELRDQVHQLRQQ).

The protein belongs to the UvrB family. In terms of assembly, forms a heterotetramer with UvrA during the search for lesions. Interacts with UvrC in an incision complex.

It is found in the cytoplasm. The UvrABC repair system catalyzes the recognition and processing of DNA lesions. A damage recognition complex composed of 2 UvrA and 2 UvrB subunits scans DNA for abnormalities. Upon binding of the UvrA(2)B(2) complex to a putative damaged site, the DNA wraps around one UvrB monomer. DNA wrap is dependent on ATP binding by UvrB and probably causes local melting of the DNA helix, facilitating insertion of UvrB beta-hairpin between the DNA strands. Then UvrB probes one DNA strand for the presence of a lesion. If a lesion is found the UvrA subunits dissociate and the UvrB-DNA preincision complex is formed. This complex is subsequently bound by UvrC and the second UvrB is released. If no lesion is found, the DNA wraps around the other UvrB subunit that will check the other stand for damage. This chain is UvrABC system protein B, found in Yersinia pestis bv. Antiqua (strain Antiqua).